We begin with the raw amino-acid sequence, 154 residues long: UPF0178 protein Gbem_2221 (154 aa).

Belongs to the UPF0178 family.

This is UPF0178 protein Gbem_2221 from Citrifermentans bemidjiense (strain ATCC BAA-1014 / DSM 16622 / JCM 12645 / Bem) (Geobacter bemidjiensis).